The primary structure comprises 64 residues: Chromatin protein Cren7 (64 aa).

This sequence belongs to the Cren7 family. As to quaternary structure, monomer. Methylated at multiple sites, to varying extents.

The protein resides in the chromosome. It localises to the cytoplasm. In terms of biological role, a chromatin protein, binds double-stranded DNA without sequence specificity. Constrains negative DNA supercoils. This Aeropyrum pernix (strain ATCC 700893 / DSM 11879 / JCM 9820 / NBRC 100138 / K1) protein is Chromatin protein Cren7.